We begin with the raw amino-acid sequence, 483 residues long: Malonate-semialdehyde dehydrogenase 2 (483 aa).

Residues phenylalanine 152, lysine 176, glutamate 179, arginine 180, and serine 229 each coordinate NAD(+). Cysteine 284 acts as the Nucleophile in catalysis. NAD(+) is bound at residue glutamate 384.

This sequence belongs to the aldehyde dehydrogenase family. IolA subfamily. In terms of assembly, homotetramer.

It carries out the reaction 3-oxopropanoate + NAD(+) + CoA + H2O = hydrogencarbonate + acetyl-CoA + NADH + H(+). The catalysed reaction is 2-methyl-3-oxopropanoate + NAD(+) + CoA + H2O = propanoyl-CoA + hydrogencarbonate + NADH + H(+). It functions in the pathway polyol metabolism; myo-inositol degradation into acetyl-CoA; acetyl-CoA from myo-inositol: step 7/7. Functionally, catalyzes the oxidation of malonate semialdehyde (MSA) and methylmalonate semialdehyde (MMSA) into acetyl-CoA and propanoyl-CoA, respectively. Is involved in a myo-inositol catabolic pathway. Bicarbonate, and not CO2, is the end-product of the enzymatic reaction. The sequence is that of Malonate-semialdehyde dehydrogenase 2 from Bacillus mycoides (strain KBAB4) (Bacillus weihenstephanensis).